Reading from the N-terminus, the 109-residue chain is Hainantoxin-XVIII-7 (109 aa).

Positions 1-18 are cleaved as a signal peptide; sequence MKLSIIIIATSLVIAVVA. A propeptide spanning residues 19 to 46 is cleaved from the precursor; that stretch reads FPSKDSKAIENDKTEQRMEIVVQETARA. 4 disulfide bridges follow: cysteine 47-cysteine 62, cysteine 55-cysteine 68, cysteine 59-cysteine 108, and cysteine 61-cysteine 81.

It belongs to the neurotoxin 25 family. F7 subfamily. Expressed by the venom gland.

The protein resides in the secreted. Functionally, putative ion channel inhibitor. In Cyriopagopus hainanus (Chinese bird spider), this protein is Hainantoxin-XVIII-7.